The chain runs to 322 residues: Germ cell-specific gene 1-like protein (322 aa).

Residues Met1 to Arg8 are Cytoplasmic-facing. A helical membrane pass occupies residues Ser9–Thr29. At Ser30–Gly125 the chain is on the extracellular side. Residues Val126 to Leu146 traverse the membrane as a helical segment. The Cytoplasmic portion of the chain corresponds to Leu147–Ala166. A helical transmembrane segment spans residues Phe167–Met187. Residues Thr188 to Gly209 lie on the Extracellular side of the membrane. The chain crosses the membrane as a helical span at residues Trp210–Leu230. The Cytoplasmic segment spans residues Asn231 to Cys322.

The protein belongs to the GSG1 family. In terms of assembly, component of the AMPAR complex.

The protein resides in the cell membrane. It localises to the synapse. In terms of biological role, as a component of the AMPAR complex, modifies AMPA receptor (AMPAR) gating. This Xenopus tropicalis (Western clawed frog) protein is Germ cell-specific gene 1-like protein (gsg1l).